Consider the following 502-residue polypeptide: Mannitol 2-dehydrogenase (502 aa).

37–48 (IVHIGVGGFHRA) is an NAD(+) binding site.

Belongs to the mannitol dehydrogenase family. In terms of assembly, monomer.

The catalysed reaction is D-mannitol + NAD(+) = D-fructose + NADH + H(+). Catalyzes the NAD(H)-dependent interconversion of D-fructose and D-mannitol in the mannitol metabolic pathway. This is Mannitol 2-dehydrogenase from Neosartorya fischeri (strain ATCC 1020 / DSM 3700 / CBS 544.65 / FGSC A1164 / JCM 1740 / NRRL 181 / WB 181) (Aspergillus fischerianus).